We begin with the raw amino-acid sequence, 626 residues long: Mitogen-activated protein kinase kinase kinase 3 (626 aa).

The region spanning 44 to 123 is the PB1 domain; that stretch reads DVRIKFEHNG…KSLRILLLSQ (80 aa). Polar residues-rich tracts occupy residues 146 to 155, 165 to 174, and 219 to 232; these read QSAGDINTIY, LSVSSQNPGR, and SAEN…QSLD. 2 disordered regions span residues 146 to 184 and 218 to 262; these read QSAG…YVPE and SSAE…SDRE. A Phosphoserine modification is found at Ser147. A Phosphoserine; by SGK1 modification is found at Ser166. 2 positions are modified to phosphoserine: Ser250 and Ser312. Phosphoserine; by SGK1 is present on Ser337. The residue at position 340 (Ser340) is a Phosphoserine. One can recognise a Protein kinase domain in the interval 362-622; that stretch reads WRRGKLLGQG…AEELLTHHFA (261 aa). ATP is bound by residues 368 to 376 and Lys391; that span reads LGQGAFGRV. Catalysis depends on Asp489, which acts as the Proton acceptor.

This sequence belongs to the protein kinase superfamily. STE Ser/Thr protein kinase family. MAP kinase kinase kinase subfamily. As to quaternary structure, binds both upstream activators and downstream substrates in multimolecular complexes. Part of a complex with MAP2K3, RAC1 and CCM2. Interacts with MAP2K5 and SPAG9. The cofactor is Mg(2+). In terms of processing, phosphorylation at Ser-166 and Ser-337 by SGK1 inhibits its activity.

It carries out the reaction L-seryl-[protein] + ATP = O-phospho-L-seryl-[protein] + ADP + H(+). The enzyme catalyses L-threonyl-[protein] + ATP = O-phospho-L-threonyl-[protein] + ADP + H(+). Its activity is regulated as follows. Activated by phosphorylation on Thr-530. Functionally, component of a protein kinase signal transduction cascade. Mediates activation of the NF-kappa-B, AP1 and DDIT3 transcriptional regulators. The sequence is that of Mitogen-activated protein kinase kinase kinase 3 (MAP3K3) from Homo sapiens (Human).